Consider the following 213-residue polypeptide: Nicotinate-nucleotide adenylyltransferase (213 aa).

It belongs to the NadD family.

It catalyses the reaction nicotinate beta-D-ribonucleotide + ATP + H(+) = deamido-NAD(+) + diphosphate. It functions in the pathway cofactor biosynthesis; NAD(+) biosynthesis; deamido-NAD(+) from nicotinate D-ribonucleotide: step 1/1. Its function is as follows. Catalyzes the reversible adenylation of nicotinate mononucleotide (NaMN) to nicotinic acid adenine dinucleotide (NaAD). This is Nicotinate-nucleotide adenylyltransferase from Salmonella typhi.